Consider the following 261-residue polypeptide: Chitinase 8 (261 aa).

The N-terminal stretch at 1–29 is a signal peptide; that stretch reads MTTTTTRFVQLAACAAASLLAVAASGAAA. 2 disulfide bridges follow: Cys53–Cys115 and Cys221–Cys253. Residue Glu98 is the Proton donor of the active site.

This sequence belongs to the glycosyl hydrolase 19 family. Chitinase class II subfamily. Expressed in roots, leaves, sheaths and meristems.

It catalyses the reaction Random endo-hydrolysis of N-acetyl-beta-D-glucosaminide (1-&gt;4)-beta-linkages in chitin and chitodextrins.. The polypeptide is Chitinase 8 (Cht8) (Oryza sativa subsp. japonica (Rice)).